A 309-amino-acid chain; its full sequence is Olfactory receptor 5H17 (309 aa).

Over 1-28 (MEKKNETLWTEFVLTGLTCLPQWKPLLF) the chain is Extracellular. An N-linked (GlcNAc...) asparagine glycan is attached at Asn-5. A helical membrane pass occupies residues 29–49 (LVFLVIYFMTIVGNLGLITLI). Topologically, residues 50-56 (WNDPHLH) are cytoplasmic. The chain crosses the membrane as a helical span at residues 57 to 77 (IPMYLFLSNLAFVDTWLSSTV). Residues 78–93 (TPRMLFNLLDKGKVIS) are Extracellular-facing. A helical membrane pass occupies residues 94–114 (VAECKTQFFSFAISVTTECFL). A disulfide bridge connects residues Cys-97 and Cys-189. Residues 115-144 (LAAMAYDRYAAICNPLLYPVIMTNRLCVRL) lie on the Cytoplasmic side of the membrane. The chain crosses the membrane as a helical span at residues 145 to 165 (LALSFIGGFLHAVIHESFLSR). The Extracellular portion of the chain corresponds to 166-198 (LTFCNSNIIYHFYCDVIPLLKISCTDPSLNYLI). Residues 199-219 (IFIFSGSIQVFTIMTVLISYT) form a helical membrane-spanning segment. Over 220–239 (FVLFTILKKKSDKGIRKAFS) the chain is Cytoplasmic. A helical transmembrane segment spans residues 240-260 (TCGAHLLSVSLYYGPLLFMYV). At 261-271 (HPASSEVDDQD) the chain is on the extracellular side. A helical membrane pass occupies residues 272–292 (MILSLFYTVIIPVLNPIIYSL). Residues 293–309 (RNKQVIDSLKKMLKMMV) lie on the Cytoplasmic side of the membrane.

Belongs to the G-protein coupled receptor 1 family.

It is found in the cell membrane. Functionally, potential odorant receptor. The protein is Olfactory receptor 5H17 of Mus musculus (Mouse).